Consider the following 397-residue polypeptide: MIDVELPNLMQVRAFIRVAELGSVSRATEVLFRAQSVVTRAIAELEARFAVPLFERHANGMRLTDYGECLLPRAQRVLAELDGVPSLLGTAQGEPLYLFQARRLQVFVKLCETRHMQTVARHFGLSQPAVSAALKVLEGGCGQPLFVRTSRGLQPTVASRDILFPIRRALNELRLLDSDLSAMQGTLRGVVHVGALPLGRSRILPDAILRFTAQHPQVRVVTNESPFDLLATELRVGDVDFVLGALRPHDYASDLVGEPLINEEMVVLARRGHPLLHTHLTLKGVHQARWVLPRAGSPARQLLDNCFAAAGLTAPWPVVESADLAVIRGLLVRSDMLAAVSAHQLAYEIASGELQRLPLALPGTARAIGLMQRSGCLQSPAAVALMACIRQVITEQA.

HTH lysR-type domains are found at residues 7–64 (PNLM…MRLT) and 99–156 (FQAR…LQPT). 2 consecutive DNA-binding regions (H-T-H motif) follow at residues 24–43 (VSRA…RAIA) and 116–135 (MQTV…AALK).

The protein belongs to the LysR transcriptional regulatory family.

In terms of biological role, transcriptional regulator for the galBCD and galTAP operons, encoding genes of the gallate degradation pathway. The polypeptide is HTH-type transcriptional regulator GalR (galR) (Pseudomonas putida (strain ATCC 47054 / DSM 6125 / CFBP 8728 / NCIMB 11950 / KT2440)).